The chain runs to 274 residues: Protein CIMAP1C (274 aa).

Residues 1–27 (MKLPKGTRSSVYFAQHPEKEPLPSRQE) form a disordered region. The span at 16–27 (HPEKEPLPSRQE) shows a compositional bias: basic and acidic residues. STPGR repeat units follow at residues 199–224 (PGPT…MAKR) and 235–260 (PGPG…MGIK).

The protein belongs to the CIMAP family.

The polypeptide is Protein CIMAP1C (Homo sapiens (Human)).